The following is a 481-amino-acid chain: Chromosomal replication initiator protein DnaA (481 aa).

Positions methionine 1 to proline 74 are domain I, interacts with DnaA modulators. Positions proline 74–threonine 144 are domain II. The interval alanine 101 to valine 123 is disordered. Residues glutamine 111–valine 123 show a composition bias toward low complexity. The tract at residues arginine 145–alanine 361 is domain III, AAA+ region. 4 residues coordinate ATP: glycine 189, glycine 191, lysine 192, and threonine 193. A domain IV, binds dsDNA region spans residues arginine 362 to glycine 481.

This sequence belongs to the DnaA family. In terms of assembly, oligomerizes as a right-handed, spiral filament on DNA at oriC.

The protein localises to the cytoplasm. Functionally, plays an essential role in the initiation and regulation of chromosomal replication. ATP-DnaA binds to the origin of replication (oriC) to initiate formation of the DNA replication initiation complex once per cell cycle. Binds the DnaA box (a 9 base pair repeat at the origin) and separates the double-stranded (ds)DNA. Forms a right-handed helical filament on oriC DNA; dsDNA binds to the exterior of the filament while single-stranded (ss)DNA is stabiized in the filament's interior. The ATP-DnaA-oriC complex binds and stabilizes one strand of the AT-rich DNA unwinding element (DUE), permitting loading of DNA polymerase. After initiation quickly degrades to an ADP-DnaA complex that is not apt for DNA replication. Binds acidic phospholipids. This is Chromosomal replication initiator protein DnaA from Aromatoleum aromaticum (strain DSM 19018 / LMG 30748 / EbN1) (Azoarcus sp. (strain EbN1)).